We begin with the raw amino-acid sequence, 245 residues long: 1-(5-phosphoribosyl)-5-[(5-phosphoribosylamino)methylideneamino] imidazole-4-carboxamide isomerase (245 aa).

Aspartate 7 (proton acceptor) is an active-site residue. Aspartate 129 acts as the Proton donor in catalysis.

Belongs to the HisA/HisF family.

The protein resides in the cytoplasm. The catalysed reaction is 1-(5-phospho-beta-D-ribosyl)-5-[(5-phospho-beta-D-ribosylamino)methylideneamino]imidazole-4-carboxamide = 5-[(5-phospho-1-deoxy-D-ribulos-1-ylimino)methylamino]-1-(5-phospho-beta-D-ribosyl)imidazole-4-carboxamide. It participates in amino-acid biosynthesis; L-histidine biosynthesis; L-histidine from 5-phospho-alpha-D-ribose 1-diphosphate: step 4/9. This chain is 1-(5-phosphoribosyl)-5-[(5-phosphoribosylamino)methylideneamino] imidazole-4-carboxamide isomerase, found in Aliivibrio fischeri (strain MJ11) (Vibrio fischeri).